A 399-amino-acid chain; its full sequence is Lovastatin esterase (399 aa).

The active-site Nucleophile is the Ser-57. Catalysis depends on proton acceptor residues Lys-60 and Tyr-170.

The protein belongs to the class-A beta-lactamase family.

The catalysed reaction is lovastatin + H2O = monacolin J + (S)-2-methylbutanoate + H(+). It catalyses the reaction pravastatin lactone + H2O = pravastatin diol lactone + (S)-2-methylbutanoate + H(+). It carries out the reaction mevastatin + H2O = compactin diol lactone + (S)-2-methylbutanoate + H(+). Esterase that can hydrolyze the side chain of lovastatin to produce monacolin J. Is also able to hydrolyze the side chains of mevastatin and pravastatin, but not simvastatin. This chain is Lovastatin esterase, found in Penicillium rubens (strain ATCC 28089 / DSM 1075 / NRRL 1951 / Wisconsin 54-1255) (Penicillium chrysogenum).